The primary structure comprises 252 residues: 2-succinyl-6-hydroxy-2,4-cyclohexadiene-1-carboxylate synthase (252 aa).

It belongs to the AB hydrolase superfamily. MenH family. Monomer.

The enzyme catalyses 5-enolpyruvoyl-6-hydroxy-2-succinyl-cyclohex-3-ene-1-carboxylate = (1R,6R)-6-hydroxy-2-succinyl-cyclohexa-2,4-diene-1-carboxylate + pyruvate. It functions in the pathway quinol/quinone metabolism; 1,4-dihydroxy-2-naphthoate biosynthesis; 1,4-dihydroxy-2-naphthoate from chorismate: step 3/7. The protein operates within quinol/quinone metabolism; menaquinone biosynthesis. Catalyzes a proton abstraction reaction that results in 2,5-elimination of pyruvate from 2-succinyl-5-enolpyruvyl-6-hydroxy-3-cyclohexene-1-carboxylate (SEPHCHC) and the formation of 2-succinyl-6-hydroxy-2,4-cyclohexadiene-1-carboxylate (SHCHC). This Salmonella arizonae (strain ATCC BAA-731 / CDC346-86 / RSK2980) protein is 2-succinyl-6-hydroxy-2,4-cyclohexadiene-1-carboxylate synthase.